The chain runs to 1366 residues: DNA-directed RNA polymerase subunit beta' (1366 aa).

The span at 1 to 20 (MTSSKPKKTSRVRKTTKNSK) shows a compositional bias: basic residues. The interval 1–34 (MTSSKPKKTSRVRKTTKNSKKNNPLTMPALAKTP) is disordered. The Zn(2+) site is built by Cys-248, Cys-315, Cys-322, and Cys-325. The segment at 1291–1366 (YTVDMPQSPS…LQEEGLLSDE (76 aa)) is disordered. Residues 1295–1305 (MPQSPSVSSTA) are compositionally biased toward polar residues. Over residues 1354–1366 (LEGLQEEGLLSDE) the composition is skewed to low complexity.

The protein belongs to the RNA polymerase beta' chain family. RpoC2 subfamily. In cyanobacteria the RNAP catalytic core is composed of 2 alpha, 1 beta, 1 beta', 1 gamma and 1 omega subunit. When a sigma factor is associated with the core the holoenzyme is formed, which can initiate transcription. It depends on Zn(2+) as a cofactor.

It carries out the reaction RNA(n) + a ribonucleoside 5'-triphosphate = RNA(n+1) + diphosphate. Its function is as follows. DNA-dependent RNA polymerase catalyzes the transcription of DNA into RNA using the four ribonucleoside triphosphates as substrates. In Prochlorococcus marinus (strain MIT 9301), this protein is DNA-directed RNA polymerase subunit beta'.